The primary structure comprises 567 residues: Urease subunit alpha (567 aa).

The Ni(2+) site is built by histidine 134, histidine 136, and lysine 217. At lysine 217 the chain carries N6-carboxylysine. Histidine 219 contributes to the substrate binding site. Positions 246 and 272 each coordinate Ni(2+). The active-site Proton donor is the histidine 320. Aspartate 360 contacts Ni(2+).

It belongs to the metallo-dependent hydrolases superfamily. Urease alpha subunit family. In terms of assembly, heterotrimer of UreA (gamma), UreB (beta) and UreC (alpha) subunits. Three heterotrimers associate to form the active enzyme. Requires Ni cation as cofactor. Post-translationally, carboxylation allows a single lysine to coordinate two nickel ions.

It is found in the cytoplasm. The catalysed reaction is urea + 2 H2O + H(+) = hydrogencarbonate + 2 NH4(+). The protein operates within nitrogen metabolism; urea degradation; CO(2) and NH(3) from urea (urease route): step 1/1. This Pseudomonas putida (strain GB-1) protein is Urease subunit alpha.